The chain runs to 184 residues: ATP synthase subunit b, chloroplastic (184 aa).

Residues 27–49 (LATNPINLSVVFGVLIFFGKGVL) form a helical membrane-spanning segment.

The protein belongs to the ATPase B chain family. In terms of assembly, F-type ATPases have 2 components, F(1) - the catalytic core - and F(0) - the membrane proton channel. F(1) has five subunits: alpha(3), beta(3), gamma(1), delta(1), epsilon(1). F(0) has four main subunits: a(1), b(1), b'(1) and c(10-14). The alpha and beta chains form an alternating ring which encloses part of the gamma chain. F(1) is attached to F(0) by a central stalk formed by the gamma and epsilon chains, while a peripheral stalk is formed by the delta, b and b' chains.

The protein resides in the plastid. It is found in the chloroplast thylakoid membrane. Its function is as follows. F(1)F(0) ATP synthase produces ATP from ADP in the presence of a proton or sodium gradient. F-type ATPases consist of two structural domains, F(1) containing the extramembraneous catalytic core and F(0) containing the membrane proton channel, linked together by a central stalk and a peripheral stalk. During catalysis, ATP synthesis in the catalytic domain of F(1) is coupled via a rotary mechanism of the central stalk subunits to proton translocation. Functionally, component of the F(0) channel, it forms part of the peripheral stalk, linking F(1) to F(0). The chain is ATP synthase subunit b, chloroplastic from Crucihimalaya wallichii (Rock-cress).